We begin with the raw amino-acid sequence, 571 residues long: Protein E6 homolog (571 aa).

Belongs to the chordopoxvirinae E6 family.

The protein resides in the virion. In terms of biological role, late protein which may play a role in the virion morphogenesis and have therefore an indirect role on viral transcription ability. This chain is Protein E6 homolog, found in Vertebrata (FPV).